The following is a 222-amino-acid chain: Probable nicotinate-nucleotide adenylyltransferase (222 aa).

The protein belongs to the NadD family.

The catalysed reaction is nicotinate beta-D-ribonucleotide + ATP + H(+) = deamido-NAD(+) + diphosphate. It participates in cofactor biosynthesis; NAD(+) biosynthesis; deamido-NAD(+) from nicotinate D-ribonucleotide: step 1/1. Catalyzes the reversible adenylation of nicotinate mononucleotide (NaMN) to nicotinic acid adenine dinucleotide (NaAD). The polypeptide is Probable nicotinate-nucleotide adenylyltransferase (Stenotrophomonas maltophilia (strain K279a)).